Here is a 501-residue protein sequence, read N- to C-terminus: Glutamate--tRNA ligase (501 aa).

Residues Pro-11–Gly-21 carry the 'HIGH' region motif. Residues Lys-260–Arg-264 carry the 'KMSKS' region motif. An ATP-binding site is contributed by Lys-263.

The protein belongs to the class-I aminoacyl-tRNA synthetase family. Glutamate--tRNA ligase type 1 subfamily. As to quaternary structure, monomer.

The protein resides in the cytoplasm. The enzyme catalyses tRNA(Glu) + L-glutamate + ATP = L-glutamyl-tRNA(Glu) + AMP + diphosphate. Its function is as follows. Catalyzes the attachment of glutamate to tRNA(Glu) in a two-step reaction: glutamate is first activated by ATP to form Glu-AMP and then transferred to the acceptor end of tRNA(Glu). The sequence is that of Glutamate--tRNA ligase from Flavobacterium psychrophilum (strain ATCC 49511 / DSM 21280 / CIP 103535 / JIP02/86).